Consider the following 335-residue polypeptide: Ornithine carbamoyltransferase 2, catabolic (335 aa).

Residues S62–T65, Q89, R113, and H140–Q143 contribute to the carbamoyl phosphate site. Residues N172, D236, and S240–M241 each bind L-ornithine. Residues C277 to L278 and R322 contribute to the carbamoyl phosphate site.

This sequence belongs to the aspartate/ornithine carbamoyltransferase superfamily. OTCase family.

It is found in the cytoplasm. It carries out the reaction carbamoyl phosphate + L-ornithine = L-citrulline + phosphate + H(+). Its pathway is amino-acid degradation; L-arginine degradation via ADI pathway; carbamoyl phosphate from L-arginine: step 2/2. Functionally, reversibly catalyzes the transfer of the carbamoyl group from carbamoyl phosphate (CP) to the N(epsilon) atom of ornithine (ORN) to produce L-citrulline. The protein is Ornithine carbamoyltransferase 2, catabolic (arcB2) of Staphylococcus epidermidis (strain ATCC 12228 / FDA PCI 1200).